The following is a 125-amino-acid chain: Cardioactive peptide (125 aa).

The N-terminal stretch at 1–22 is a signal peptide; that stretch reads MTVSRVCLLLLVALVYLDCCYA. Positions 23-42 are excised as a propeptide; that stretch reads ASIPRNFDPRLSEEIVMAPK. Cysteine 47 and cysteine 53 are disulfide-bonded. Cysteine amide is present on cysteine 53. The propeptide occupies 57 to 125; that stretch reads RSQGPPGMPA…RRKQKEAYIQ (69 aa).

Abdominal perivisceral organ; major neurohemal release site. Expressed in 116 neurons in post-embryonic central nervous system. Nine pairs of cells are observed in the brain, 4.5 pairs in the subesophageal ganglion, three pairs in each thoracic ganglion (T1-T3), three pairs in the first abdominal ganglion (A1), five pairs each in the second to sixth abdominal ganglia (A2-A6) and 7.5 pairs in the terminal ganglion. Expressed in every ganglion in each post-embryonic stage, except in the thoracic ganglia of first- and second-instar larvae. Colocalizes with CAP2b in median neurosecretory cells during the last larval instar through to adults.

It localises to the secreted. In terms of biological role, cardioregulatory neurohormone that increases heart beat rate during adult wing inflation; has no effect on beat amplitude. The effect of CCAP is both ino- and chronotropic. This chain is Cardioactive peptide, found in Manduca sexta (Tobacco hawkmoth).